The sequence spans 316 residues: uncharacterized protein (316 aa).

Residues serine 1–tyrosine 70 lie on the Cytoplasmic side of the membrane. Residues isoleucine 71–leucine 91 traverse the membrane as a helical segment. Histidine 92 is a topological domain (lumenal). A helical membrane pass occupies residues phenylalanine 93 to leucine 113. Residues asparagine 114–lysine 170 are Cytoplasmic-facing. A helical transmembrane segment spans residues tyrosine 171–leucine 191. Topologically, residues tyrosine 192–aspartate 194 are lumenal. A helical transmembrane segment spans residues valine 195–valine 215. Residues tyrosine 216–asparagine 245 are Cytoplasmic-facing. A helical membrane pass occupies residues alanine 246–glycine 266. At asparagine 267–isoleucine 316 the chain is on the lumenal side.

This sequence belongs to the UPF0742 family.

Its subcellular location is the endoplasmic reticulum. It is found in the membrane. This is an uncharacterized protein from Schizosaccharomyces pombe (strain 972 / ATCC 24843) (Fission yeast).